Here is a 336-residue protein sequence, read N- to C-terminus: Phospho-N-acetylmuramoyl-pentapeptide-transferase (336 aa).

The next 10 membrane-spanning stretches (helical) occupy residues 3–23 (LTLIAAIISFMVSAFTMPYFI), 53–73 (GGTVFLLVATAVSLLVSLFSI), 78–98 (SLALISGILSIVVIYGIIGFL), 118–138 (LALQLAGGLMFYFLHVSPSGI), 143–163 (VFGYQLSLGIFYLFFVLFWVV), 174–194 (GIDGLASISVVISLVTYGVIA), 200–220 (FDVLLLIGTMIGALLGFFLFN), 226–246 (VFMGDVGSLALGAMLAAISIA), 251–271 (WTLLIIGIVYVLETSSVMLQV), and 316–336 (AFLWGVGSLASLLVLAILYVF).

Belongs to the glycosyltransferase 4 family. MraY subfamily. It depends on Mg(2+) as a cofactor.

The protein localises to the cell membrane. The enzyme catalyses UDP-N-acetyl-alpha-D-muramoyl-L-alanyl-gamma-D-glutamyl-L-lysyl-D-alanyl-D-alanine + di-trans,octa-cis-undecaprenyl phosphate = Mur2Ac(oyl-L-Ala-gamma-D-Glu-L-Lys-D-Ala-D-Ala)-di-trans,octa-cis-undecaprenyl diphosphate + UMP. It functions in the pathway cell wall biogenesis; peptidoglycan biosynthesis. Its function is as follows. Catalyzes the initial step of the lipid cycle reactions in the biosynthesis of the cell wall peptidoglycan: transfers peptidoglycan precursor phospho-MurNAc-pentapeptide from UDP-MurNAc-pentapeptide onto the lipid carrier undecaprenyl phosphate, yielding undecaprenyl-pyrophosphoryl-MurNAc-pentapeptide, known as lipid I. This Streptococcus pyogenes serotype M6 (strain ATCC BAA-946 / MGAS10394) protein is Phospho-N-acetylmuramoyl-pentapeptide-transferase.